The sequence spans 90 residues: Acylphosphatase (90 aa).

An Acylphosphatase-like domain is found at 5-90; it reads CVKASVKGIV…WRHIDGFEIK (86 aa). Active-site residues include R20 and N38.

This sequence belongs to the acylphosphatase family.

The enzyme catalyses an acyl phosphate + H2O = a carboxylate + phosphate + H(+). In Photobacterium profundum (strain SS9), this protein is Acylphosphatase (acyP).